The following is a 123-amino-acid chain: Ribosome-binding factor A (123 aa).

Belongs to the RbfA family. As to quaternary structure, monomer. Binds 30S ribosomal subunits, but not 50S ribosomal subunits or 70S ribosomes.

The protein resides in the cytoplasm. One of several proteins that assist in the late maturation steps of the functional core of the 30S ribosomal subunit. Associates with free 30S ribosomal subunits (but not with 30S subunits that are part of 70S ribosomes or polysomes). Required for efficient processing of 16S rRNA. May interact with the 5'-terminal helix region of 16S rRNA. In Chlamydia trachomatis serovar L2 (strain ATCC VR-902B / DSM 19102 / 434/Bu), this protein is Ribosome-binding factor A.